Reading from the N-terminus, the 514-residue chain is Major facilitator superfamily domain-containing protein 4A (514 aa).

Transmembrane regions (helical) follow at residues 19–39, 53–73, 82–102, 107–127, and 139–159; these read LTYW…GPTL, ISWV…LGGV, LWAL…IPFC, VLAS…TVAN, and AVFL…SPLI. Asn-177 is a glycosylation site (N-linked (GlcNAc...) asparagine). 7 helical membrane-spanning segments follow: residues 221-241, 307-327, 347-367, 376-396, 400-420, 438-458, and 466-486; these read YAFW…LMLL, FFAI…LTGA, VAGY…LLSI, ATMV…LLIF, VVFL…TFPS, VLVT…GSIF, and FLVC…LLLF.

The protein belongs to the major facilitator superfamily.

Its subcellular location is the membrane. The protein is Major facilitator superfamily domain-containing protein 4A of Homo sapiens (Human).